We begin with the raw amino-acid sequence, 209 residues long: Pyridoxine/pyridoxamine 5'-phosphate oxidase (209 aa).

Substrate contacts are provided by residues 7–10 (REDY) and lysine 64. Residues 59-64 (RIVLLK), 74-75 (FT), arginine 80, and lysine 81 each bind FMN. Residues tyrosine 121, arginine 125, and serine 129 each coordinate substrate. Residues 138–139 (QS) and tryptophan 182 contribute to the FMN site. 188–190 (RLH) is a substrate binding site. Arginine 192 provides a ligand contact to FMN.

This sequence belongs to the pyridoxamine 5'-phosphate oxidase family. In terms of assembly, homodimer. FMN serves as cofactor.

It catalyses the reaction pyridoxamine 5'-phosphate + O2 + H2O = pyridoxal 5'-phosphate + H2O2 + NH4(+). It carries out the reaction pyridoxine 5'-phosphate + O2 = pyridoxal 5'-phosphate + H2O2. The protein operates within cofactor metabolism; pyridoxal 5'-phosphate salvage; pyridoxal 5'-phosphate from pyridoxamine 5'-phosphate: step 1/1. Its pathway is cofactor metabolism; pyridoxal 5'-phosphate salvage; pyridoxal 5'-phosphate from pyridoxine 5'-phosphate: step 1/1. Catalyzes the oxidation of either pyridoxine 5'-phosphate (PNP) or pyridoxamine 5'-phosphate (PMP) into pyridoxal 5'-phosphate (PLP). The polypeptide is Pyridoxine/pyridoxamine 5'-phosphate oxidase (Actinobacillus pleuropneumoniae serotype 3 (strain JL03)).